A 109-amino-acid chain; its full sequence is Large ribosomal subunit protein uL24 (109 aa).

This sequence belongs to the universal ribosomal protein uL24 family. Part of the 50S ribosomal subunit.

One of two assembly initiator proteins, it binds directly to the 5'-end of the 23S rRNA, where it nucleates assembly of the 50S subunit. Its function is as follows. One of the proteins that surrounds the polypeptide exit tunnel on the outside of the subunit. This Legionella pneumophila (strain Paris) protein is Large ribosomal subunit protein uL24.